The primary structure comprises 666 residues: TATA box-binding protein-associated factor RNA polymerase I subunit B (666 aa).

The RRN7-type zinc-finger motif lies at methionine 1 to glutamate 29. Zn(2+) contacts are provided by cysteine 3, cysteine 6, cysteine 21, and cysteine 24. The tract at residues asparagine 30–proline 64 is B-reader. Disordered regions lie at residues glycine 45–glutamate 110 and aspartate 189–histidine 208. Residues isoleucine 65 to serine 80 are B-linker. Polar residues predominate over residues arginine 78–glutamate 89. Positions glutamine 81 to alanine 285 are N-terminal cyclin fold. Basic and acidic residues-rich tracts occupy residues asparagine 90–glutamate 110 and aspartate 189–alanine 202. The C-terminal cyclin fold stretch occupies residues cysteine 286 to valine 288. The tract at residues serine 515–proline 548 is disordered. Residues serine 539–proline 548 are compositionally biased toward basic and acidic residues.

The protein belongs to the RRN7/TAF1B family. In terms of assembly, interacts with TFIIF. Interacts with MEE14/CBP1, TBP1 and NRPB1 (via CTD). Expressed at high levels in seedlings, inflorescences and young siliques and at lower levels in roots. Not detected in leaves and stems. Detected in root tips and shoot apical meristems, in anthers, primarily in microspores with weaker expression in mature pollen grains and in the central cell of the mature female gametophyte. Not expressed in synergids, egg cells, antipodal cells, endosperm cells and fertilized egg cells.

The protein localises to the nucleus. Its subcellular location is the nucleolus. In terms of biological role, component of RNA polymerase I core factor complex that acts as a GTF2B/TFIIB-like factor and plays a key role in multiple steps during transcription initiation such as pre-initiation complex (PIC) assembly and postpolymerase recruitment events in polymerase I (Pol I) transcription. Binds rDNA promoters and plays a role in Pol I recruitment. Required for the development of the one-cell zygote and endosperm in embryos. Required for micropylar pollen tube guidance, but has no effect on ovule development and gametophytic cell fate specification. May regulate the transcription of secreted cysteine-rich peptide (CRP) genes in the embryo sac. This Arabidopsis thaliana (Mouse-ear cress) protein is TATA box-binding protein-associated factor RNA polymerase I subunit B.